The following is a 328-amino-acid chain: Protease HtpX homolog (328 aa).

2 helical membrane-spanning segments follow: residues 6–26 and 28–48; these read TAMLLAFMTALFMGVGYLIGG and SGMMIAFVAAAGMNFFSYWNS. His-130 is a binding site for Zn(2+). Glu-131 is an active-site residue. Position 134 (His-134) interacts with Zn(2+). The next 2 helical transmembrane spans lie at 145 to 165 and 172 to 192; these read ITATLAGAISMLGNFAFFFGG and PLGAIGVLAAMIVAPLAAMLV. Glu-201 contacts Zn(2+). The tract at residues 279-328 is disordered; that stretch reads QYGGGTGPSVGTPTRSGSTGPAMTANPERKSRSVPNTGRGGSQPPKGPWS. Low complexity predominate over residues 287–299; that stretch reads SVGTPTRSGSTGP.

Belongs to the peptidase M48B family. Zn(2+) is required as a cofactor.

The protein localises to the cell inner membrane. This Rhizobium rhizogenes (strain K84 / ATCC BAA-868) (Agrobacterium radiobacter) protein is Protease HtpX homolog.